The following is a 218-amino-acid chain: MARKGILGTKLGMTQVFDENNKVVPVTVVKAGPNVVTRIRTTERDGYSAVQLAYGEISPRKVNKPVTGQFAAAGVNPRRHLAELRLADNEDAGALYEVGQELTAEIFADGAYVDVTGTSKGKGFAGTMKRHGFKGQGASHGAQAVHRRPGSIGGCATPGRVFKGTRMSGRMGSDRVTTQNLKVHKVDAENGVLLIKGAIPGRNGGLVVVRSAIKRGEK.

The protein belongs to the universal ribosomal protein uL3 family. As to quaternary structure, part of the 50S ribosomal subunit. Forms a cluster with proteins L14 and L19.

Its function is as follows. One of the primary rRNA binding proteins, it binds directly near the 3'-end of the 23S rRNA, where it nucleates assembly of the 50S subunit. The chain is Large ribosomal subunit protein uL3 from Mycolicibacterium gilvum (strain PYR-GCK) (Mycobacterium gilvum (strain PYR-GCK)).